The chain runs to 105 residues: Thiosulfate sulfurtransferase GlpE (105 aa).

Positions 15 to 103 constitute a Rhodanese domain; it reads MQQGAILVDI…WCRAELPIDT (89 aa). The active-site Cysteine persulfide intermediate is the C63.

The protein belongs to the GlpE family.

The protein localises to the cytoplasm. The catalysed reaction is thiosulfate + hydrogen cyanide = thiocyanate + sulfite + 2 H(+). The enzyme catalyses thiosulfate + [thioredoxin]-dithiol = [thioredoxin]-disulfide + hydrogen sulfide + sulfite + 2 H(+). Functionally, transferase that catalyzes the transfer of sulfur from thiosulfate to thiophilic acceptors such as cyanide or dithiols. May function in a CysM-independent thiosulfate assimilation pathway by catalyzing the conversion of thiosulfate to sulfite, which can then be used for L-cysteine biosynthesis. The sequence is that of Thiosulfate sulfurtransferase GlpE from Haemophilus influenzae (strain PittEE).